The chain runs to 645 residues: Sister chromatid cohesion protein 1 (645 aa).

3 disordered regions span residues 292–311 (FEPENVEPSRPQSPESFALE), 495–527 (QSGFAGENKENEDAEDWSDPFGSSNSSRRGQLE), and 619–645 (CPLSSPKPMGLGNTMENSTMRTPMRPV).

This sequence belongs to the rad21 family. As to quaternary structure, component of the cohesin complex, composed of the smc-1 and smc-3 heterodimer attached via their hinge domain, scc-1 which links them, and scc-3. Interacts with smc-1, smc-3, scc-3 and tim-1.

Its subcellular location is the nucleus. The protein localises to the chromosome. It localises to the cytoplasm. Its function is as follows. Cleavable component of the cohesin complex involved in chromosome cohesion during cell cycle. The cohesin complex is required for the cohesion of sister chromatids after DNA replication. The cohesin complex apparently forms a large proteinaceous ring within which sister chromatids can be trapped. At metaphase-anaphase transition, this protein is cleaved and dissociates from chromatin, allowing sister chromatids to segregate. This chain is Sister chromatid cohesion protein 1, found in Caenorhabditis elegans.